An 80-amino-acid chain; its full sequence is Small ribosomal subunit protein bS16 (80 aa).

This sequence belongs to the bacterial ribosomal protein bS16 family.

The protein is Small ribosomal subunit protein bS16 of Laribacter hongkongensis (strain HLHK9).